The chain runs to 185 residues: Dual specificity protein phosphatase 3 (185 aa).

The Tyrosine-protein phosphatase domain maps to 28–179 (QPCNEVVPRV…LCQLNDRLAK (152 aa)). The active-site Phosphocysteine intermediate is C124.

It belongs to the protein-tyrosine phosphatase family. Non-receptor class dual specificity subfamily. In terms of assembly, microtubule inner protein component of sperm flagellar doublet microtubules. Interacts with VRK3; this interaction activates DUSP3 phosphatase activity.

It localises to the nucleus. It is found in the cytoplasm. The protein resides in the cytoskeleton. Its subcellular location is the flagellum axoneme. The enzyme catalyses O-phospho-L-tyrosyl-[protein] + H2O = L-tyrosyl-[protein] + phosphate. It carries out the reaction O-phospho-L-seryl-[protein] + H2O = L-seryl-[protein] + phosphate. It catalyses the reaction O-phospho-L-threonyl-[protein] + H2O = L-threonyl-[protein] + phosphate. Shows activity both for tyrosine-protein phosphate and serine-protein phosphate, but displays a strong preference toward phosphotyrosines. Specifically dephosphorylates and inactivates ERK1 and ERK2. This chain is Dual specificity protein phosphatase 3 (Dusp3), found in Mus musculus (Mouse).